Consider the following 102-residue polypeptide: PqqA binding protein (102 aa).

It belongs to the PqqD family. As to quaternary structure, monomer. Interacts with PqqE.

Its pathway is cofactor biosynthesis; pyrroloquinoline quinone biosynthesis. Functionally, functions as a PqqA binding protein and presents PqqA to PqqE, in the pyrroloquinoline quinone (PQQ) biosynthetic pathway. The chain is PqqA binding protein from Rhodopseudomonas palustris (strain ATCC BAA-98 / CGA009).